Consider the following 74-residue polypeptide: Small ribosomal subunit protein bS18 (74 aa).

It belongs to the bacterial ribosomal protein bS18 family. As to quaternary structure, part of the 30S ribosomal subunit. Forms a tight heterodimer with protein bS6.

Its function is as follows. Binds as a heterodimer with protein bS6 to the central domain of the 16S rRNA, where it helps stabilize the platform of the 30S subunit. This chain is Small ribosomal subunit protein bS18, found in Thioalkalivibrio sulfidiphilus (strain HL-EbGR7).